The primary structure comprises 364 residues: Ribosomal RNA large subunit methyltransferase F (364 aa).

The tract at residues 1–52 (MPKPAIKTAAKLAMSSAGKRGKPSTPKSLAKPQTTKPKTASKLKAKHGEQKR) is disordered. Over residues 25 to 38 (TPKSLAKPQTTKPK) the composition is skewed to polar residues.

The protein belongs to the methyltransferase superfamily. METTL16/RlmF family.

It is found in the cytoplasm. It catalyses the reaction adenosine(1618) in 23S rRNA + S-adenosyl-L-methionine = N(6)-methyladenosine(1618) in 23S rRNA + S-adenosyl-L-homocysteine + H(+). Functionally, specifically methylates the adenine in position 1618 of 23S rRNA. This is Ribosomal RNA large subunit methyltransferase F from Shewanella sp. (strain ANA-3).